The primary structure comprises 140 residues: Nucleoside diphosphate kinase (140 aa).

Positions 10, 58, 86, 92, 103, and 113 each coordinate ATP. Residue histidine 116 is the Pros-phosphohistidine intermediate of the active site.

This sequence belongs to the NDK family. Homohexamer. The cofactor is Mg(2+).

The protein localises to the cytoplasm. The enzyme catalyses a 2'-deoxyribonucleoside 5'-diphosphate + ATP = a 2'-deoxyribonucleoside 5'-triphosphate + ADP. It catalyses the reaction a ribonucleoside 5'-diphosphate + ATP = a ribonucleoside 5'-triphosphate + ADP. Major role in the synthesis of nucleoside triphosphates other than ATP. The ATP gamma phosphate is transferred to the NDP beta phosphate via a ping-pong mechanism, using a phosphorylated active-site intermediate. In Methanocaldococcus jannaschii (strain ATCC 43067 / DSM 2661 / JAL-1 / JCM 10045 / NBRC 100440) (Methanococcus jannaschii), this protein is Nucleoside diphosphate kinase.